A 63-amino-acid polypeptide reads, in one-letter code: Large ribosomal subunit protein uL29 (63 aa).

It belongs to the universal ribosomal protein uL29 family.

The sequence is that of Large ribosomal subunit protein uL29 from Yersinia pseudotuberculosis serotype O:1b (strain IP 31758).